Consider the following 473-residue polypeptide: Cysteine protease ATG4A (473 aa).

The segment at 1 to 33 (MTSLPGRGVSPSSSDPLCEGNAAPSSSSSGQDL) is disordered. Residue cysteine 160 is the Nucleophile of the active site. Catalysis depends on residues aspartate 357 and histidine 359.

The protein belongs to the peptidase C54 family. Interacts with ATG8.

It is found in the cytoplasm. It carries out the reaction [protein]-C-terminal L-amino acid-glycyl-phosphatidylethanolamide + H2O = [protein]-C-terminal L-amino acid-glycine + a 1,2-diacyl-sn-glycero-3-phosphoethanolamine. Its function is as follows. Cysteine protease that plays a key role in autophagy by mediating both proteolytic activation and delipidation of ATG8 family proteins. The protease activity is required for proteolytic activation of ATG8 family proteins: cleaves the C-terminal amino acid of ATG8 proteins to reveal a C-terminal glycine. Exposure of the glycine at the C-terminus is essential for ATG8 proteins conjugation to phosphatidylethanolamine (PE) and insertion to membranes, which is necessary for autophagy. In addition to the protease activity, also mediates delipidation of PE-conjugated ATG8 proteins. This is Cysteine protease ATG4A (ATG4A) from Oryza sativa subsp. indica (Rice).